The sequence spans 282 residues: Anamorsin homolog (282 aa).

Residues 5–151 (VDTNNFVLLL…EVGAKTALSL (147 aa)) are N-terminal SAM-like domain. Residues 152–196 (SFAPKPAQPKAETSAAQIWTLSAQDIDDEDVDLLDSDTLLDEDDL) are linker. [2Fe-2S] cluster-binding residues include Cys-208, Cys-218, Cys-221, and Cys-223. Residues 208 to 223 (CGPGSGKKKACKNCTC) form a fe-S binding site A region. [4Fe-4S] cluster contacts are provided by Cys-243, Cys-246, Cys-254, and Cys-257. Short sequence motifs (cx2C motif) lie at residues 243–246 (CGSC) and 254–257 (CSTC). The interval 243–257 (CGSCYLGDAFRCSTC) is fe-S binding site B.

This sequence belongs to the anamorsin family. In terms of assembly, monomer. It depends on [2Fe-2S] cluster as a cofactor. [4Fe-4S] cluster serves as cofactor.

The protein resides in the cytoplasm. Its subcellular location is the mitochondrion intermembrane space. Functionally, component of the cytosolic iron-sulfur (Fe-S) protein assembly (CIA) machinery. Required for the maturation of extramitochondrial Fe-S proteins. Part of an electron transfer chain functioning in an early step of cytosolic Fe-S biogenesis, facilitating the de novo assembly of a [4Fe-4S] cluster on the cytosolic Fe-S scaffold complex. Electrons are transferred from NADPH via a FAD- and FMN-containing diflavin oxidoreductase. Together with the diflavin oxidoreductase, also required for the assembly of the diferric tyrosyl radical cofactor of ribonucleotide reductase (RNR), probably by providing electrons for reduction during radical cofactor maturation in the catalytic small subunit. This Nematostella vectensis (Starlet sea anemone) protein is Anamorsin homolog.